Reading from the N-terminus, the 447-residue chain is UDP-N-acetylmuramate--L-alanine ligase (447 aa).

107–113 (GTHGKTT) provides a ligand contact to ATP.

It belongs to the MurCDEF family.

It localises to the cytoplasm. It catalyses the reaction UDP-N-acetyl-alpha-D-muramate + L-alanine + ATP = UDP-N-acetyl-alpha-D-muramoyl-L-alanine + ADP + phosphate + H(+). It participates in cell wall biogenesis; peptidoglycan biosynthesis. Functionally, cell wall formation. This Rubrobacter xylanophilus (strain DSM 9941 / JCM 11954 / NBRC 16129 / PRD-1) protein is UDP-N-acetylmuramate--L-alanine ligase.